A 330-amino-acid chain; its full sequence is Malate dehydrogenase (330 aa).

13–19 lines the NAD(+) pocket; that stretch reads GAAGQIG. Substrate is bound by residues arginine 94 and arginine 100. Residues asparagine 107, glutamine 114, and 131 to 133 contribute to the NAD(+) site; that span reads VGN. Residues asparagine 133 and arginine 164 each contribute to the substrate site. Histidine 189 acts as the Proton acceptor in catalysis.

This sequence belongs to the LDH/MDH superfamily. MDH type 2 family.

It catalyses the reaction (S)-malate + NAD(+) = oxaloacetate + NADH + H(+). Functionally, catalyzes the reversible oxidation of malate to oxaloacetate. The sequence is that of Malate dehydrogenase from Deinococcus deserti (strain DSM 17065 / CIP 109153 / LMG 22923 / VCD115).